Here is a 434-residue protein sequence, read N- to C-terminus: Cytochrome P450 144 (434 aa).

Aspartate 124 and histidine 128 together coordinate substrate. Arginine 132, arginine 326, histidine 383, and cysteine 385 together coordinate heme.

It belongs to the cytochrome P450 family. As to quaternary structure, monomer. Heme serves as cofactor.

This chain is Cytochrome P450 144 (cyp144), found in Mycobacterium tuberculosis (strain CDC 1551 / Oshkosh).